Here is a 256-residue protein sequence, read N- to C-terminus: Ribosomal RNA large subunit methyltransferase E (256 aa).

5 residues coordinate S-adenosyl-L-methionine: Gly-50, Trp-52, Asp-69, Asp-85, and Asp-108. Lys-148 serves as the catalytic Proton acceptor. The region spanning 195–253 (SLRKGDVVDVTIDAMGKTGDGIAHVDDFVVFVKGGSVGDKLKIKITDVKPSFAFADIVE) is the TRAM domain.

The protein belongs to the class I-like SAM-binding methyltransferase superfamily. RNA methyltransferase RlmE family.

It localises to the cytoplasm. It catalyses the reaction uridine(2552) in 23S rRNA + S-adenosyl-L-methionine = 2'-O-methyluridine(2552) in 23S rRNA + S-adenosyl-L-homocysteine + H(+). In terms of biological role, specifically methylates the uridine in position 2552 of 23S rRNA at the 2'-O position of the ribose in the fully assembled 50S ribosomal subunit. The protein is Ribosomal RNA large subunit methyltransferase E of Methanocella arvoryzae (strain DSM 22066 / NBRC 105507 / MRE50).